We begin with the raw amino-acid sequence, 280 residues long: Octanoyltransferase LIP2p2, chloroplastic (280 aa).

The transit peptide at methionine 1 to lysine 34 directs the protein to the chloroplast. Positions glutamine 81–methionine 270 constitute a BPL/LPL catalytic domain. Substrate contacts are provided by residues arginine 123–histidine 130, alanine 191–glycine 193, and glycine 204–alanine 206. Cysteine 222 acts as the Acyl-thioester intermediate in catalysis.

This sequence belongs to the LipB family. As to expression, expressed in roots, leaves, cauline leaves, stems, siliques and flowers.

The protein resides in the plastid. Its subcellular location is the chloroplast. It carries out the reaction octanoyl-[ACP] + L-lysyl-[protein] = N(6)-octanoyl-L-lysyl-[protein] + holo-[ACP] + H(+). It participates in protein modification; protein lipoylation via endogenous pathway; protein N(6)-(lipoyl)lysine from octanoyl-[acyl-carrier-protein]: step 1/2. Functionally, catalyzes the transfer of endogenously produced octanoic acid from octanoyl-acyl-carrier-protein onto the lipoyl domains of lipoate-dependent enzymes. Lipoyl-ACP can also act as a substrate although octanoyl-ACP is likely to be the physiological substrate. Together with LIP1P is essential for de novo plastidial protein lipoylation during seed development. Acts redundantly with LIP2P. The chain is Octanoyltransferase LIP2p2, chloroplastic from Arabidopsis thaliana (Mouse-ear cress).